A 299-amino-acid chain; its full sequence is GTPase Era (299 aa).

An Era-type G domain is found at 5-175; the sequence is RSGFVCLVGR…IDVLAAALPP (171 aa). Residues 13 to 20 form a G1 region; sequence GRPNTGKS. Position 13 to 20 (13 to 20) interacts with GTP; it reads GRPNTGKS. The G2 stretch occupies residues 39 to 43; the sequence is QTTRH. A G3 region spans residues 60–63; that stretch reads DTPG. Residues 60-64 and 124-127 each bind GTP; these read DTPGL and TKID. A G4 region spans residues 124-127; the sequence is TKID. The interval 154 to 156 is G5; sequence VSA. Residues 206 to 285 form the KH type-2 domain; the sequence is VRDELPHSLA…YLDLRVKVAK (80 aa).

This sequence belongs to the TRAFAC class TrmE-Era-EngA-EngB-Septin-like GTPase superfamily. Era GTPase family. Monomer.

It localises to the cell envelope. The protein localises to the secreted. The protein resides in the cell wall. Functionally, exhibits GTPase activity. Binds RNA but is probably not involved in ribosome assembly in mycobacteria. The protein is GTPase Era of Mycobacterium avium (strain 104).